The chain runs to 352 residues: [Citrate [pro-3S]-lyase] ligase (352 aa).

An N-acetyltransferase domain is found at 1 to 128 (MFGNDIFTRV…VMVLMENSAT (128 aa)).

It catalyses the reaction holo-[citrate lyase ACP] + acetate + ATP = acetyl-[citrate lyase ACP] + AMP + diphosphate. In terms of biological role, acetylation of prosthetic group (2-(5''-phosphoribosyl)-3'-dephosphocoenzyme-A) of the gamma subunit of citrate lyase. The polypeptide is [Citrate [pro-3S]-lyase] ligase (citC) (Escherichia coli (strain K12)).